A 205-amino-acid chain; its full sequence is Methylthioribulose-1-phosphate dehydratase (205 aa).

Cys-75 is a substrate binding site. Residues His-93 and His-95 each contribute to the Zn(2+) site. Glu-116 functions as the Proton donor/acceptor in the catalytic mechanism. His-171 serves as a coordination point for Zn(2+).

The protein belongs to the aldolase class II family. MtnB subfamily. The cofactor is Zn(2+).

The protein localises to the cytoplasm. The enzyme catalyses 5-(methylsulfanyl)-D-ribulose 1-phosphate = 5-methylsulfanyl-2,3-dioxopentyl phosphate + H2O. It participates in amino-acid biosynthesis; L-methionine biosynthesis via salvage pathway; L-methionine from S-methyl-5-thio-alpha-D-ribose 1-phosphate: step 2/6. In terms of biological role, catalyzes the dehydration of methylthioribulose-1-phosphate (MTRu-1-P) into 2,3-diketo-5-methylthiopentyl-1-phosphate (DK-MTP-1-P). In Kluyveromyces lactis (strain ATCC 8585 / CBS 2359 / DSM 70799 / NBRC 1267 / NRRL Y-1140 / WM37) (Yeast), this protein is Methylthioribulose-1-phosphate dehydratase.